A 171-amino-acid polypeptide reads, in one-letter code: MDRAEKKECVESLSEVFKSTSVVVVAHYSGLTVAQMQNLRKQMRAAGAAVQVAKNRLVKIALEGSEVASIADLMRGPTLIAYSADPVAAAKAAVAFAKDNDKLVILGGAMGKTALNADAVKSLATMPSLDELRAKLVGLIQAPATKLAQLVNAPAGKLARVISAYAEKDAA.

This sequence belongs to the universal ribosomal protein uL10 family. As to quaternary structure, part of the ribosomal stalk of the 50S ribosomal subunit. The N-terminus interacts with L11 and the large rRNA to form the base of the stalk. The C-terminus forms an elongated spine to which L12 dimers bind in a sequential fashion forming a multimeric L10(L12)X complex.

In terms of biological role, forms part of the ribosomal stalk, playing a central role in the interaction of the ribosome with GTP-bound translation factors. The protein is Large ribosomal subunit protein uL10 of Methylocella silvestris (strain DSM 15510 / CIP 108128 / LMG 27833 / NCIMB 13906 / BL2).